Reading from the N-terminus, the 592-residue chain is Malic enzyme, hydrogenosomal (592 aa).

Residues 1 to 27 (MLAPIQTIARPVSSILPATGALAAKRT) constitute a hydrogenosome transit peptide. The active-site Proton donor is Tyr134. Residue 182 to 205 (VTDGSRILGLGDLGAGGMQIPIGK) coordinates NADP(+). Arg187 lines the NAD(+) pocket. Lys205 serves as the catalytic Proton acceptor. Glu276, Asp277, and Asp300 together coordinate a divalent metal cation. Residue Asp300 coordinates NAD(+). 335–352 (GAGSSGVGVCETIVDCIV) is a binding site for NADP(+). Asn443 is an NAD(+) binding site.

This sequence belongs to the malic enzymes family. Requires Mg(2+) as cofactor. Mn(2+) is required as a cofactor.

It is found in the hydrogenosome. The enzyme catalyses (S)-malate + NADP(+) = pyruvate + CO2 + NADPH. The catalysed reaction is oxaloacetate + H(+) = pyruvate + CO2. The polypeptide is Malic enzyme, hydrogenosomal (Neocallimastix frontalis (Rumen fungus)).